We begin with the raw amino-acid sequence, 90 residues long: Iron oxidase (90 aa).

Positions 1-37 (MSEKDKMITRRDALRNIAVVVGSVATTTMMGVGVADA) form a signal peptide, tat-type signal. Cysteine 57, cysteine 60, cysteine 69, and cysteine 82 together coordinate [4Fe-4S] cluster.

It belongs to the high-potential iron-sulfur protein (HiPIP) family. Homomultimer. Post-translationally, predicted to be exported by the Tat system. The position of the signal peptide cleavage has been experimentally proven.

The protein resides in the periplasm. Functionally, catalyzes the oxidation of Fe(2+) to Fe(3+) coupled to cytochrome c552 reduction. The polypeptide is Iron oxidase (iro) (Acidithiobacillus ferrooxidans (Thiobacillus ferrooxidans)).